Here is a 288-residue protein sequence, read N- to C-terminus: ATP synthase gamma chain (288 aa).

Belongs to the ATPase gamma chain family. F-type ATPases have 2 components, CF(1) - the catalytic core - and CF(0) - the membrane proton channel. CF(1) has five subunits: alpha(3), beta(3), gamma(1), delta(1), epsilon(1). CF(0) has three main subunits: a, b and c.

Its subcellular location is the cell membrane. Produces ATP from ADP in the presence of a proton gradient across the membrane. The gamma chain is believed to be important in regulating ATPase activity and the flow of protons through the CF(0) complex. This Staphylococcus saprophyticus subsp. saprophyticus (strain ATCC 15305 / DSM 20229 / NCIMB 8711 / NCTC 7292 / S-41) protein is ATP synthase gamma chain.